The sequence spans 804 residues: Probable phosphoketolase (804 aa).

The protein belongs to the XFP family. Thiamine diphosphate is required as a cofactor.

In Mycobacterium avium (strain 104), this protein is Probable phosphoketolase.